Here is a 384-residue protein sequence, read N- to C-terminus: 8-amino-7-oxononanoate synthase (384 aa).

Arg-21 serves as a coordination point for substrate. Gly-108 to Phe-109 is a pyridoxal 5'-phosphate binding site. His-133 contributes to the substrate binding site. Pyridoxal 5'-phosphate-binding residues include Ser-179, His-207, and Thr-233. Lys-236 bears the N6-(pyridoxal phosphate)lysine mark. Thr-352 contacts substrate.

It belongs to the class-II pyridoxal-phosphate-dependent aminotransferase family. BioF subfamily. Homodimer. Pyridoxal 5'-phosphate serves as cofactor.

It carries out the reaction 6-carboxyhexanoyl-[ACP] + L-alanine + H(+) = (8S)-8-amino-7-oxononanoate + holo-[ACP] + CO2. It participates in cofactor biosynthesis; biotin biosynthesis. In terms of biological role, catalyzes the decarboxylative condensation of pimeloyl-[acyl-carrier protein] and L-alanine to produce 8-amino-7-oxononanoate (AON), [acyl-carrier protein], and carbon dioxide. The polypeptide is 8-amino-7-oxononanoate synthase (Escherichia coli O17:K52:H18 (strain UMN026 / ExPEC)).